The chain runs to 508 residues: Mevalonate kinase ERG12 (508 aa).

The disordered stretch occupies residues 1-46 (MPPSNPAMVNGLNGSHANGNGNGHNHISDSGSETSGESSNGSGRRR). A compositionally biased stretch (low complexity) spans 10 to 42 (NGLNGSHANGNGNGHNHISDSGSETSGESSNGS). ATP-binding positions include K68, S200, and 205–211 (GAGLGSS). Mg(2+) contacts are provided by S211 and E256. The active-site Proton acceptor is D267.

This sequence belongs to the GHMP kinase family. Mevalonate kinase subfamily. As to quaternary structure, homodimer. Mg(2+) is required as a cofactor.

The protein localises to the cytoplasm. It is found in the cytosol. The catalysed reaction is (R)-mevalonate + ATP = (R)-5-phosphomevalonate + ADP + H(+). It participates in isoprenoid biosynthesis; isopentenyl diphosphate biosynthesis via mevalonate pathway; isopentenyl diphosphate from (R)-mevalonate: step 1/3. Functionally, mevalonate kinase; part of the second module of ergosterol biosynthesis pathway that includes the middle steps of the pathway. ERG12 converts mevalonate into 5-phosphomevalonate. The second module is carried out in the vacuole and involves the formation of farnesyl diphosphate, which is also an important intermediate in the biosynthesis of ubiquinone, dolichol, heme and prenylated proteins. Activity by the mevalonate kinase ERG12 (FG05912) first converts mevalonate into 5-phosphomevalonate. 5-phosphomevalonate is then further converted to 5-diphosphomevalonate by the phosphomevalonate kinase ERG8 (FG09764). The diphosphomevalonate decarboxylase ERG19 (FG10424) then produces isopentenyl diphosphate. The isopentenyl-diphosphate delta-isomerase IDI1 (FG09722) then catalyzes the 1,3-allylic rearrangement of the homoallylic substrate isopentenyl (IPP) to its highly electrophilic allylic isomer, dimethylallyl diphosphate (DMAPP). Finally the farnesyl diphosphate synthase ERG20 (FG06784) catalyzes the sequential condensation of isopentenyl pyrophosphate with dimethylallyl pyrophosphate, and then with the resultant geranylpyrophosphate to the ultimate product farnesyl pyrophosphate. This Gibberella zeae (strain ATCC MYA-4620 / CBS 123657 / FGSC 9075 / NRRL 31084 / PH-1) (Wheat head blight fungus) protein is Mevalonate kinase ERG12.